A 100-amino-acid chain; its full sequence is MICOS complex subunit MIC12 (100 aa).

Residues 10-26 (FATISSVAAASLYLYAI) traverse the membrane as a helical segment.

The protein belongs to the MICOS complex subunit Mic12 family. As to quaternary structure, component of the mitochondrial contact site and cristae organizing system (MICOS) complex.

It localises to the mitochondrion inner membrane. In terms of biological role, component of the MICOS complex, a large protein complex of the mitochondrial inner membrane that plays crucial roles in the maintenance of crista junctions, inner membrane architecture, and formation of contact sites to the outer membrane. The chain is MICOS complex subunit MIC12 (AIM5) from Vanderwaltozyma polyspora (strain ATCC 22028 / DSM 70294 / BCRC 21397 / CBS 2163 / NBRC 10782 / NRRL Y-8283 / UCD 57-17) (Kluyveromyces polysporus).